A 580-amino-acid polypeptide reads, in one-letter code: Cyclin-K (580 aa).

Residues 262–580 are disordered; that stretch reads KQQMPHHTPH…GGLGRAAWMR (319 aa). 2 stretches are compositionally biased toward low complexity: residues 263-277 and 285-321; these read QQMP…QQPP and VPQV…QQPK. S324, S328, S329, and S340 each carry phosphoserine. A compositionally biased stretch (low complexity) spans 377–386; the sequence is PLAAALGEAE. Over residues 400–426 the composition is skewed to pro residues; the sequence is QIPPPAHPAPVHQPPPLPHRPPPPPPS. Low complexity predominate over residues 427–444; the sequence is SYMTGMSTTSSYMSGEGY. Positions 477–568 are enriched in pro residues; the sequence is VYPPNPPPPP…PPPIPPPGMP (92 aa).

The protein belongs to the cyclin family. Cyclin C subfamily. Regulatory subunit of cyclin-dependent kinases. Identified in a complex with a kinase and the RNA polymerase II holoenzyme. Interacts with POLR2A. Interacts with CDK12 and CDK13. Interacts with CDK9 according to PubMed:10574912; does not interact with CDK9 according to PubMed:22012619. As to quaternary structure, (Microbial infection) Interacts with human herpes virus 1 (HHV-1) transcriptional regulator ICP22. In terms of tissue distribution, widely expressed. Highest levels in testis.

Its subcellular location is the nucleus. In terms of biological role, regulatory subunit of cyclin-dependent kinases that mediates activation of target kinases. Plays a role in transcriptional regulation via its role in regulating the phosphorylation of the C-terminal domain (CTD) of the large subunit of RNA polymerase II (POLR2A). This Homo sapiens (Human) protein is Cyclin-K (CCNK).